We begin with the raw amino-acid sequence, 397 residues long: ATP phosphoribosyltransferase regulatory subunit (397 aa).

It belongs to the class-II aminoacyl-tRNA synthetase family. HisZ subfamily. In terms of assembly, heteromultimer composed of HisG and HisZ subunits.

The protein localises to the cytoplasm. It functions in the pathway amino-acid biosynthesis; L-histidine biosynthesis; L-histidine from 5-phospho-alpha-D-ribose 1-diphosphate: step 1/9. Required for the first step of histidine biosynthesis. May allow the feedback regulation of ATP phosphoribosyltransferase activity by histidine. This is ATP phosphoribosyltransferase regulatory subunit from Halalkalibacterium halodurans (strain ATCC BAA-125 / DSM 18197 / FERM 7344 / JCM 9153 / C-125) (Bacillus halodurans).